We begin with the raw amino-acid sequence, 131 residues long: Small ribosomal subunit protein uS8 (131 aa).

Belongs to the universal ribosomal protein uS8 family. As to quaternary structure, part of the 30S ribosomal subunit. Contacts proteins S5 and S12.

In terms of biological role, one of the primary rRNA binding proteins, it binds directly to 16S rRNA central domain where it helps coordinate assembly of the platform of the 30S subunit. This chain is Small ribosomal subunit protein uS8, found in Chlorobaculum tepidum (strain ATCC 49652 / DSM 12025 / NBRC 103806 / TLS) (Chlorobium tepidum).